Consider the following 612-residue polypeptide: Apoptosis-inducing factor 1, mitochondrial (612 aa).

2 short sequence motifs (mitochondrial localization signal) span residues 1–30 (MFRC…PKQR) and 62–88 (KMDN…KTIK). A mitochondrion-targeting transit peptide spans 1–54 (MFRCGGLAGAFKQKLVPLVRTVYVQRPKQRNRLPGNLFQQWRVPLELQMARQMA). Residues 55–101 (SSGSSGGKMDNSVLVLIVGLSTIGAGAYAYKTIKEDQKRYNERVMGL) constitute a propeptide, removed in mature form. The residue at position 108 (Lys-108) is an N6-succinyllysine. Ser-115 is subject to Phosphoserine. An FAD-dependent oxidoreductase region spans residues 133-482 (FLLIGGGTAA…KPYWHQSMFW (350 aa)). Residues 137 to 141 (GGGTA), 163 to 164 (ED), Arg-171, and Lys-176 each bind FAD. Trp-195 is a binding site for NAD(+). FAD is bound at residue Val-232. Lys-254 participates in a covalent cross-link: Glycyl lysine isopeptide (Lys-Gly) (interchain with G-Cter in ubiquitin). Ser-267 bears the Phosphoserine mark. FAD is bound at residue Arg-284. Residues 307–310 (GGFL), Glu-335, and Lys-341 each bind NAD(+). Phosphoserine is present on Ser-370. At Lys-387 the chain carries N6-acetyllysine. Gly-398 contributes to the NAD(+) binding site. FAD is bound at residue Asp-437. A Nuclear localization signal motif is present at residues 445-450 (KLGRRR). NAD(+) is bound by residues 452–453 (EH), Trp-482, and Glu-492. Residues 453–454 (HH) and Trp-482 contribute to the FAD site. Over residues 512-528 (AQDNPKSATEQSGTGIR) the composition is skewed to polar residues. The tract at residues 512–551 (AQDNPKSATEQSGTGIRSESETESEASEITIPPSAPAVPQ) is disordered. The residue at position 520 (Thr-520) is a Phosphothreonine. Residues Ser-523 and Ser-529 each carry the phosphoserine modification. Asn-582 is a binding site for NAD(+). Lys-592 is subject to N6-acetyllysine.

It belongs to the FAD-dependent oxidoreductase family. Monomer (oxidized form). Homodimer (reduced form). Upon reduction with NADH, undergoes dimerization and forms tight, long-lived FADH2-NAD charge transfer complexes (CTC) resistant to oxidation. Also dimerizes with isoform 3 preventing its release from mitochondria. Interacts with XIAP/BIRC4. Interacts (via N-terminus) with EIF3G (via C-terminus). Interacts with PRELID1. Interacts with CHCHD4; the interaction increases in presence of NADH. Interacts with processed form of PARP1 (Poly [ADP-ribose] polymerase 1, processed C-terminus); interaction is mediated with poly-ADP-ribose chains attached to PARP1, promoting translocation into the nucleus. Requires FAD as cofactor. Post-translationally, under normal conditions, a 54-residue N-terminal segment is first proteolytically removed during or just after translocation into the mitochondrial intermembrane space (IMS) by the mitochondrial processing peptidase (MPP) to form the inner-membrane-anchored mature form (AIFmit). During apoptosis, it is further proteolytically processed at amino-acid position 101 leading to the generation of the mature form, which is confined to the mitochondrial IMS in a soluble form (AIFsol). AIFsol is released to the cytoplasm in response to specific death signals, and translocated to the nucleus, where it induces nuclear apoptosis in a caspase-independent manner. Ubiquitination by XIAP/BIRC4 does not lead to proteasomal degradation. Ubiquitination at Lys-254 by XIAP/BIRC4 blocks its ability to bind DNA and induce chromatin degradation, thereby inhibiting its ability to induce cell death. In terms of tissue distribution, expressed in cortical neurons (at protein level). As to expression, expressed in liver (at protein level).

The protein resides in the mitochondrion intermembrane space. It is found in the mitochondrion inner membrane. The protein localises to the cytoplasm. Its subcellular location is the nucleus. It localises to the perinuclear region. The protein resides in the mitochondrion. It is found in the cytosol. The catalysed reaction is A + NADH + H(+) = AH2 + NAD(+). Functions both as NADH oxidoreductase and as regulator of apoptosis. In response to apoptotic stimuli, it is released from the mitochondrion intermembrane space into the cytosol and to the nucleus, where it functions as a proapoptotic factor in a caspase-independent pathway. Release into the cytoplasm is mediated upon binding to poly-ADP-ribose chains. The soluble form (AIFsol) found in the nucleus induces 'parthanatos' i.e. caspase-independent fragmentation of chromosomal DNA. Binds to DNA in a sequence-independent manner. Interacts with EIF3G, and thereby inhibits the EIF3 machinery and protein synthesis, and activates caspase-7 to amplify apoptosis. Plays a critical role in caspase-independent, pyknotic cell death in hydrogen peroxide-exposed cells. In contrast, participates in normal mitochondrial metabolism. Plays an important role in the regulation of respiratory chain biogenesis by interacting with CHCHD4 and controlling CHCHD4 mitochondrial import. This chain is Apoptosis-inducing factor 1, mitochondrial, found in Mus musculus (Mouse).